Consider the following 223-residue polypeptide: Sporulation-specific protein 19 (223 aa).

A signal peptide spans 1–20; that stretch reads MKKQILIVAAQSILCSTVFG. A lipid anchor (GPI-anchor amidated asparagine) is attached at asparagine 198. A propeptide spans 199–223 (removed in mature form); the sequence is ASNFLTPTTVALAVLLTILLFIQAY.

The GPI-anchor is attached to the protein in the endoplasmic reticulum and serves to target the protein to the cell surface. There, the glucosamine-inositol phospholipid moiety is cleaved off and the GPI-modified mannoprotein is covalently attached via its lipidless GPI glycan remnant to the 1,6-beta-glucan of the outer cell wall layer.

The protein localises to the secreted. It localises to the cell wall. Its subcellular location is the membrane. Involved in sporulation. Essential for completion of the nuclear division. The protein is Sporulation-specific protein 19 (SPO19) of Saccharomyces cerevisiae (strain ATCC 204508 / S288c) (Baker's yeast).